We begin with the raw amino-acid sequence, 284 residues long: Short-chain dehydrogenase RED1 (284 aa).

Ile11, Thr37, Asp58, Asn86, Tyr151, Lys155, Val184, and Thr186 together coordinate NADP(+). The Proton acceptor role is filled by Tyr151. The active-site Lowers pKa of active site Tyr is Lys155.

It belongs to the short-chain dehydrogenases/reductases (SDR) family.

It participates in polyketide biosynthesis. Short-chain dehydrogenase; part of the gene cluster that mediates the biosynthesis of pyriculol and pyriculariol, two heptaketides that induce lesion formation upon application on rice leaves but are dispensable for pathogenicity. The highly reducing polyketide synthase synthesizes the heptaketide backbone of pyriculol and pyriculariol. Pyriculol and pyriculariol contain several hydroxyl moieties and double bonds, so it can be assumed that several reduction steps occur during biosynthesis. These reactions could be executed by PKS19 itself or partly by the tailoring enzymes OXR1, OXR2, RED1, RED2 or RED3, identified within the cluster. The FAD-linked oxidoreductase OXR1 is the only tailoring enzyme for which the function has been determined yet, and is involved in the oxidation of dihydropyriculol and dihydropyriculariol into pyriculol and pyriculariol, respectively. This chain is Short-chain dehydrogenase RED1, found in Pyricularia oryzae (strain 70-15 / ATCC MYA-4617 / FGSC 8958) (Rice blast fungus).